The following is a 259-amino-acid chain: UPF0246 protein ABBFA_001173 (259 aa).

The protein belongs to the UPF0246 family.

This Acinetobacter baumannii (strain AB307-0294) protein is UPF0246 protein ABBFA_001173.